We begin with the raw amino-acid sequence, 344 residues long: Probable dual-specificity RNA methyltransferase RlmN (344 aa).

Residue Glu83 is the Proton acceptor of the active site. The Radical SAM core domain maps to 89–323 (YLDRKTICVS…VSVRRSRGKD (235 aa)). A disulfide bond links Cys96 and Cys328. [4Fe-4S] cluster is bound by residues Cys103, Cys107, and Cys110. S-adenosyl-L-methionine contacts are provided by residues 153-154 (GE), Ser185, 209-211 (SLH), and Asn285. The active-site S-methylcysteine intermediate is the Cys328.

It belongs to the radical SAM superfamily. RlmN family. [4Fe-4S] cluster serves as cofactor.

The protein resides in the cytoplasm. It carries out the reaction adenosine(2503) in 23S rRNA + 2 reduced [2Fe-2S]-[ferredoxin] + 2 S-adenosyl-L-methionine = 2-methyladenosine(2503) in 23S rRNA + 5'-deoxyadenosine + L-methionine + 2 oxidized [2Fe-2S]-[ferredoxin] + S-adenosyl-L-homocysteine. The catalysed reaction is adenosine(37) in tRNA + 2 reduced [2Fe-2S]-[ferredoxin] + 2 S-adenosyl-L-methionine = 2-methyladenosine(37) in tRNA + 5'-deoxyadenosine + L-methionine + 2 oxidized [2Fe-2S]-[ferredoxin] + S-adenosyl-L-homocysteine. In terms of biological role, specifically methylates position 2 of adenine 2503 in 23S rRNA and position 2 of adenine 37 in tRNAs. The chain is Probable dual-specificity RNA methyltransferase RlmN from Deinococcus geothermalis (strain DSM 11300 / CIP 105573 / AG-3a).